A 44-amino-acid chain; its full sequence is 2S seed storage albumin protein (44 aa).

Cystine bridges form between Cys-7–Cys-42 and Cys-19–Cys-31.

It belongs to the 2S seed storage albumins family. As to quaternary structure, the mature protein consists of a small and a large chain linked by 2 disulfide bonds.

In terms of biological role, this is a 2S seed storage protein. Has antifungal activity. Inhibits spore germination in H.sativum (IC(50)=62.5 ug/ml) and P.betae (IC(50)=62.5 ug/ml). Inhibits growth of H.sativum, V.albo-atrum and P.infestans. The polypeptide is 2S seed storage albumin protein (Taraxacum officinale (Common dandelion)).